The sequence spans 229 residues: 3-dehydroquinate dehydratase (229 aa).

3-dehydroquinate contacts are provided by residues 29-31 (ELR) and Arg-56. Catalysis depends on His-120, which acts as the Proton donor/acceptor. Lys-146 (schiff-base intermediate with substrate) is an active-site residue. 3-dehydroquinate is bound by residues Arg-187, Thr-208, and Gln-212.

It belongs to the type-I 3-dehydroquinase family. In terms of assembly, homodimer.

The enzyme catalyses 3-dehydroquinate = 3-dehydroshikimate + H2O. Its pathway is metabolic intermediate biosynthesis; chorismate biosynthesis; chorismate from D-erythrose 4-phosphate and phosphoenolpyruvate: step 3/7. Its function is as follows. Involved in the third step of the chorismate pathway, which leads to the biosynthesis of aromatic amino acids. Catalyzes the cis-dehydration of 3-dehydroquinate (DHQ) and introduces the first double bond of the aromatic ring to yield 3-dehydroshikimate. The polypeptide is 3-dehydroquinate dehydratase (Haloarcula marismortui (strain ATCC 43049 / DSM 3752 / JCM 8966 / VKM B-1809) (Halobacterium marismortui)).